A 130-amino-acid polypeptide reads, in one-letter code: Small ribosomal subunit protein uS8 (130 aa).

The protein belongs to the universal ribosomal protein uS8 family. Part of the 30S ribosomal subunit. Contacts proteins S5 and S12.

One of the primary rRNA binding proteins, it binds directly to 16S rRNA central domain where it helps coordinate assembly of the platform of the 30S subunit. In Wigglesworthia glossinidia brevipalpis, this protein is Small ribosomal subunit protein uS8.